The chain runs to 261 residues: Peroxiredoxin PRX1, mitochondrial (261 aa).

Residues 1-13 (MFSRICSAQLKRT) constitute a mitochondrion transit peptide. The region spanning 49 to 212 (LRINSDAPNF…VLRVIDALQL (164 aa)) is the Thioredoxin domain. Ser-53 is modified (phosphoserine). The active-site Cysteine sulfenic acid (-SOH) intermediate is Cys-91.

This sequence belongs to the peroxiredoxin family. Prx6 subfamily. Homodimer; disulfide-linked.

The protein resides in the mitochondrion. The enzyme catalyses a hydroperoxide + 2 glutathione = an alcohol + glutathione disulfide + H2O. It carries out the reaction [glutaredoxin]-dithiol + a hydroperoxide = [glutaredoxin]-disulfide + an alcohol + H2O. Thiol-specific peroxidase that catalyzes the reduction of hydrogen peroxide and organic hydroperoxides to water and alcohols, respectively. Plays a role in cell protection against oxidative stress by detoxifying peroxides and as sensor of hydrogen peroxide-mediated signaling events. Involved in mitochondrial protection of cadmium-induced oxidative stress. The chain is Peroxiredoxin PRX1, mitochondrial from Saccharomyces cerevisiae (strain ATCC 204508 / S288c) (Baker's yeast).